A 99-amino-acid polypeptide reads, in one-letter code: Virion membrane protein OPG135 (99 aa).

Residues 1–22 (MSCYTAILKSVGGLALFQVANG) form the signal peptide. Over 23–45 (AIDLCRHFFMYFCEQKLRPNSFW) the chain is Intravirion. A helical transmembrane segment spans residues 46 to 66 (FVVVRAIASMIMYLVLGIALL). Residues 67 to 83 (YISEQDDKKNTNNDGSN) are Virion surface-facing. Residues 73–89 (DKKNTNNDGSNNDKRNE) are compositionally biased toward basic and acidic residues. The segment at 73 to 99 (DKKNTNNDGSNNDKRNESSINSNSSPK) is disordered. An N-linked (GlcNAc...) asparagine; by host glycan is attached at Asn-88. Residues 90–99 (SSINSNSSPK) are compositionally biased toward polar residues.

It belongs to the oerthopoxvirus OPG135 family.

The protein resides in the virion membrane. Its subcellular location is the host cytoplasm. Functionally, envelope protein. Required for an early step in virion morphogenesis. This chain is Virion membrane protein OPG135 (OPG135), found in Homo sapiens (Human).